The following is a 68-amino-acid chain: Tau-scoloptoxin(04)-Ssm1b (68 aa).

The signal sequence occupies residues 1 to 25 (MLKSFCILSVFMVLFLAKFPDLCSG). Positions 26-36 (EEISPLKIVVR) are excised as a propeptide. Cystine bridges form between cysteine 45-cysteine 56 and cysteine 50-cysteine 63. The highly charged C-terminal region, binds to TRPV1 channel stretch occupies residues 55 to 67 (RCSIVDKQCIKKE).

This sequence belongs to the scoloptoxin-04 family. Expressed by the venom gland.

The protein localises to the secreted. Extremely potent agonist and potentiator of TRPV1 (EC(50)=470-521.5 nM (mouse)). It strongly promotes the heat activation process by downshifting the activation threshold temperature. It preferably binds to the activated channel and promotes its opening. Holding the channel closed by cooling prevents binding of this toxin, leaving it ineffective. The toxin binds to the charge-rich outer pore region of the channel where it directly interacts with the pore helix and turret, two adjacent structural elements known to be critical for activation gating of TRPV1. In comparison with Sm1b, induces a TRPV1 desensitization with slower kinetics (20 seconds). In vivo, induces pain in mice after intraplantar injection. Functionally, potent agonist and probable potentiator of TRPV1 (EC(50)=38.35 uM (mouse)). Also binds to the outer pore region of TRPV1. In comparison with Sm1a, induces a TRPV1 desensitization with faster kinetics (2 seconds) and leads to a more complete TRPV1 desensitization. Desensitization is achieved by reducing both the open probability and the single-channel conductance upon prolonged exposure. This chain is Tau-scoloptoxin(04)-Ssm1b, found in Scolopendra mutilans (Chinese red-headed centipede).